The primary structure comprises 136 residues: Small ribosomal subunit protein bS16 (136 aa).

The protein belongs to the bacterial ribosomal protein bS16 family.

The polypeptide is Small ribosomal subunit protein bS16 (Pseudarthrobacter chlorophenolicus (strain ATCC 700700 / DSM 12829 / CIP 107037 / JCM 12360 / KCTC 9906 / NCIMB 13794 / A6) (Arthrobacter chlorophenolicus)).